Here is a 157-residue protein sequence, read N- to C-terminus: Large ribosomal subunit protein uL3 (157 aa).

Residues 57–98 (GKGFAGSIKRHNQSRGPESHGSRYHRRPGSMGPIKGKLKGKK) are disordered.

The protein belongs to the universal ribosomal protein uL3 family. Part of the 50S ribosomal subunit. Forms a cluster with proteins L14 and L19.

Its function is as follows. One of the primary rRNA binding proteins, it binds directly near the 3'-end of the 23S rRNA, where it nucleates assembly of the 50S subunit. This chain is Large ribosomal subunit protein uL3 (rplC), found in Onion yellows phytoplasma (strain OY-M).